The primary structure comprises 168 residues: Transcriptional regulator MraZ (168 aa).

SpoVT-AbrB domains are found at residues 8–51 and 90–140; these read EYNQ…GGDR and ALNM…KADT.

The protein belongs to the MraZ family. As to quaternary structure, forms oligomers.

The protein localises to the cytoplasm. It is found in the nucleoid. The sequence is that of Transcriptional regulator MraZ from Cereibacter sphaeroides (strain ATCC 17029 / ATH 2.4.9) (Rhodobacter sphaeroides).